Reading from the N-terminus, the 96-residue chain is uncharacterized protein (96 aa).

The protein localises to the mitochondrion. This is an uncharacterized protein from Saccharomyces cerevisiae (strain ATCC 204508 / S288c) (Baker's yeast).